The chain runs to 98 residues: Beta-2-microglobulin (98 aa).

An Ig-like C1-type domain is found at 4 to 92 (PKVQVYSRFP…HETLKEPQVY (89 aa)). A disulfide bridge links cysteine 24 with cysteine 79.

Belongs to the beta-2-microglobulin family. In terms of assembly, heterodimer of an alpha chain and a beta chain. Beta-2-microglobulin is the beta-chain of major histocompatibility complex class I molecules.

The protein resides in the secreted. Component of the class I major histocompatibility complex (MHC). Involved in the presentation of peptide antigens to the immune system. This Meleagris gallopavo (Wild turkey) protein is Beta-2-microglobulin (B2M).